The primary structure comprises 327 residues: Ornithine carbamoyltransferase (327 aa).

Carbamoyl phosphate-binding positions include Ser56–Thr59, Gln83, Arg107, and His134–Gln137. L-ornithine contacts are provided by residues Asn166, Asp230, and Ser234–Met235. Carbamoyl phosphate is bound by residues Cys269 to Leu270 and Arg314.

This sequence belongs to the aspartate/ornithine carbamoyltransferase superfamily. OTCase family.

It is found in the cytoplasm. The catalysed reaction is carbamoyl phosphate + L-ornithine = L-citrulline + phosphate + H(+). It functions in the pathway amino-acid degradation; L-arginine degradation via ADI pathway; carbamoyl phosphate from L-arginine: step 2/2. Functionally, reversibly catalyzes the transfer of the carbamoyl group from carbamoyl phosphate (CP) to the N(epsilon) atom of ornithine (ORN) to produce L-citrulline. The chain is Ornithine carbamoyltransferase from Borreliella burgdorferi (strain ZS7) (Borrelia burgdorferi).